A 228-amino-acid chain; its full sequence is Response regulator MprA (228 aa).

In terms of domain architecture, Response regulatory spans 2 to 116 (RILVVDDDRA…ELLARMRALL (115 aa)). Asp46 is modified (4-aspartylphosphate). The ompR/PhoB-type DNA-binding region spans 127–225 (SVAMTFSDLT…VRGVGYVLRE (99 aa)).

In terms of processing, phosphorylated and dephosphorylated by MprB.

It is found in the cytoplasm. Its function is as follows. Member of the two-component regulatory system MprB/MprA which contributes to maintaining a balance among several systems involved in stress resistance and is required for establishment and maintenance of persistent infection in the host. Functions as a transcriptional regulator that recognizes a 19-bp nucleotide motif comprizing two loosely conserved 8-bp direct DNA-binding motif repeats separated by a 3-bp spacer region. This is Response regulator MprA (mprA) from Mycobacterium avium (strain 104).